The sequence spans 288 residues: tRNA-cytidine(32) 2-sulfurtransferase (288 aa).

A PP-loop motif motif is present at residues 70–75 (SGGKDS). [4Fe-4S] cluster is bound by residues cysteine 145, cysteine 148, and cysteine 236.

It belongs to the TtcA family. As to quaternary structure, homodimer. The cofactor is Mg(2+). [4Fe-4S] cluster serves as cofactor.

The protein resides in the cytoplasm. It catalyses the reaction cytidine(32) in tRNA + S-sulfanyl-L-cysteinyl-[cysteine desulfurase] + AH2 + ATP = 2-thiocytidine(32) in tRNA + L-cysteinyl-[cysteine desulfurase] + A + AMP + diphosphate + H(+). It participates in tRNA modification. In terms of biological role, catalyzes the ATP-dependent 2-thiolation of cytidine in position 32 of tRNA, to form 2-thiocytidine (s(2)C32). The sulfur atoms are provided by the cysteine/cysteine desulfurase (IscS) system. The sequence is that of tRNA-cytidine(32) 2-sulfurtransferase from Bartonella tribocorum (strain CIP 105476 / IBS 506).